A 202-amino-acid polypeptide reads, in one-letter code: Ribonuclease HII (202 aa).

Residues 12-201 form the RNase H type-2 domain; it reads LLIAGVDEAG…VRQLKLFIPE (190 aa). 3 residues coordinate a divalent metal cation: D18, E19, and D110.

Belongs to the RNase HII family. Requires Mn(2+) as cofactor. It depends on Mg(2+) as a cofactor.

It localises to the cytoplasm. It catalyses the reaction Endonucleolytic cleavage to 5'-phosphomonoester.. Functionally, endonuclease that specifically degrades the RNA of RNA-DNA hybrids. In Coxiella burnetii (strain CbuG_Q212) (Coxiella burnetii (strain Q212)), this protein is Ribonuclease HII.